A 312-amino-acid chain; its full sequence is Pyridoxal kinase (312 aa).

An N-acetylmethionine modification is found at methionine 1. Residues serine 12 and threonine 47 each coordinate pyridoxal. Pyridoxal 5'-phosphate is bound at residue threonine 47. Serine 59 is subject to Phosphoserine. An ATP-binding site is contributed by aspartate 113. Position 113 (aspartate 113) interacts with Na(+). Position 118 (aspartate 118) interacts with Mg(2+). Na(+) is bound at residue threonine 148. Asparagine 150–glutamate 153 contributes to the ATP binding site. Serine 164 bears the Phosphoserine mark. Threonine 186 is a Na(+) binding site. An ATP-binding site is contributed by threonine 186 to serine 187. Residue serine 213 is modified to Phosphoserine. ATP-binding positions include valine 226–alanine 228 and threonine 233. A pyridoxal 5'-phosphate-binding site is contributed by glycine 234–aspartate 235. Aspartate 235 functions as the Proton acceptor in the catalytic mechanism. Serine 285 bears the Phosphoserine mark.

The protein belongs to the pyridoxine kinase family. In terms of assembly, homodimer. Mg(2+) is required as a cofactor. Zn(2+) serves as cofactor. The cofactor is Co(2+). Requires Mn(2+) as cofactor. In terms of tissue distribution, ubiquitous. Highly expressed in testis. As to expression, in adult testis and spermatozoa.

Its subcellular location is the cytoplasm. It localises to the cytosol. It catalyses the reaction pyridoxal + ATP = pyridoxal 5'-phosphate + ADP + H(+). The catalysed reaction is pyridoxamine + ATP = pyridoxamine 5'-phosphate + ADP + H(+). The enzyme catalyses pyridoxine + ATP = pyridoxine 5'-phosphate + ADP + H(+). It functions in the pathway cofactor metabolism; pyridoxal 5'-phosphate salvage; pyridoxal 5'-phosphate from pyridoxal: step 1/1. Its pathway is cofactor metabolism; pyridoxal 5'-phosphate salvage; pyridoxine 5'-phosphate from pyridoxine: step 1/1. It participates in cofactor metabolism; pyridoxal 5'-phosphate salvage; pyridoxamine 5'-phosphate from pyridoxamine: step 1/1. With respect to regulation, catalytic activity is inhibited competitively by 4-deoxypyridoxine, and is also inhibited by the benzodiazepine receptor ligands 1012S and ethyl-beta-carboline-3-carboxylate. Inhibited by ginkgotoxin, theophylline, lamotrigine, enprofylline, theobromine, and caffeine. Activity is increased in the presence of K(+)or Na(+). In terms of biological role, catalyzes the phosphorylation of the dietary vitamin B6 vitamers pyridoxal (PL), pyridoxine (PN) and pyridoxamine (PM) to form pyridoxal 5'-phosphate (PLP), pyridoxine 5'-phosphate (PNP) and pyridoxamine 5'-phosphate (PMP), respectively. PLP is the active form of vitamin B6, and acts as a cofactor for over 140 different enzymatic reactions. The polypeptide is Pyridoxal kinase (Homo sapiens (Human)).